The primary structure comprises 351 residues: Phosphoribosylformylglycinamidine cyclo-ligase (351 aa).

The protein belongs to the AIR synthase family.

The protein resides in the cytoplasm. It carries out the reaction 2-formamido-N(1)-(5-O-phospho-beta-D-ribosyl)acetamidine + ATP = 5-amino-1-(5-phospho-beta-D-ribosyl)imidazole + ADP + phosphate + H(+). It participates in purine metabolism; IMP biosynthesis via de novo pathway; 5-amino-1-(5-phospho-D-ribosyl)imidazole from N(2)-formyl-N(1)-(5-phospho-D-ribosyl)glycinamide: step 2/2. The sequence is that of Phosphoribosylformylglycinamidine cyclo-ligase from Burkholderia multivorans (strain ATCC 17616 / 249).